The following is an 837-amino-acid chain: Anaphase-promoting complex subunit 4 (837 aa).

Low complexity-rich tracts occupy residues 59 to 81 (NDNN…NDNN) and 547 to 581 (SSSS…NNNN). 2 disordered regions span residues 59–89 (NDNN…KSNK) and 547–588 (SSSS…QSGN).

This sequence belongs to the APC4 family. In terms of assembly, the APC/C is composed of at least 13 subunits that stay tightly associated throughout the cell cycle: anapc1, anapc2, anapc3, anapc4, anapc5, anapc6, anapc7, anapc8, anapc10, anapc11, cdc20, cdc26 and cdh1.

It is found in the nucleus. The protein operates within protein modification; protein ubiquitination. In terms of biological role, component of the anaphase promoting complex/cyclosome (APC/C), a cell cycle-regulated E3 ubiquitin-protein ligase complex that controls progression through mitosis and the G1 phase of the cell cycle. The polypeptide is Anaphase-promoting complex subunit 4 (anapc4) (Dictyostelium discoideum (Social amoeba)).